The following is a 387-amino-acid chain: ATP phosphoribosyltransferase regulatory subunit (387 aa).

The protein belongs to the class-II aminoacyl-tRNA synthetase family. HisZ subfamily. In terms of assembly, heteromultimer composed of HisG and HisZ subunits.

The protein localises to the cytoplasm. It functions in the pathway amino-acid biosynthesis; L-histidine biosynthesis; L-histidine from 5-phospho-alpha-D-ribose 1-diphosphate: step 1/9. Required for the first step of histidine biosynthesis. May allow the feedback regulation of ATP phosphoribosyltransferase activity by histidine. This is ATP phosphoribosyltransferase regulatory subunit from Ralstonia pickettii (strain 12J).